The primary structure comprises 834 residues: MEAMLPLFEPKGRVLLVDGHHLAYRTFFALKGLTTSRGEPVQAVYGFAKSLLKALKEDGYKAVFVVFDAKAPSFRHEAYEAYKAGRAPTPEDFPRQLALIKELVDLLGFTRLEVPGYEADDVLATLAKKAEKEGYEVRILTADRDLYQLVSDRVAVLHPEGHLITPEWLWEKYGLRPEQWVDFRALVGDPSDNLPGVKGIGEKTALKLLKEWGSLENLLKNLDRVKPENVREKIKAHLEDLRLSLELSRVRTDLPLEVDLAQGREPDREGLRAFLERLEFGSLLHEFGLLEAPAPLEEAPWPPPEGAFVGFVLSRPEPMWAELKALAACRDGRVHRAADPLAGLKDLKEVRGLLAKDLAVLASREGLDLVPGDDPMLLAYLLDPSNTTPEGVARRYGGEWTEDAAHRALLSERLHRNLLKRLEGEEKLLWLYHEVEKPLSRVLAHMEATGVRLDVAYLQALSLELAEEIRRLEEEVFRLAGHPFNLNSRDQLERVLFDELRLPALGKTQKTGKRSTSAAVLEALREAHPIVEKILQHRELTKLKNTYVDPLPSLVHPRTGRLHTRFNQTATATGRLSSSDPNLQNIPVRTPLGQRIRRAFVAEAGWALVALDYSQIELRVLAHLSGDENLIRVFQEGKDIHTQTASWMFGVPPEAVDPLMRRAAKTVNFGVLYGMSAHRLSQELAIPYEEAVAFIERYFQSFPKVRAWIEKTLEEGRKRGYVETLFGRRRYVPDLNARVKSVREAAERMAFNMPVQGTAADLMKLAMVKLFPRLREMGARMLLQVHDELLLEAPQARAEEVAALAKEAMEKAYPLAVPLEVEVGMGEDWLSAKG.

One can recognise a 5'-3' exonuclease domain in the interval 176–262 (RPEQWVDFRA…DLPLEVDLAQ (87 aa)). Positions 412–834 (ERLHRNLLKR…MGEDWLSAKG (423 aa)) are polymerase.

This sequence belongs to the DNA polymerase type-A family.

The enzyme catalyses DNA(n) + a 2'-deoxyribonucleoside 5'-triphosphate = DNA(n+1) + diphosphate. Its function is as follows. In addition to polymerase activity, this DNA polymerase exhibits 5'-3' exonuclease activity. The chain is DNA polymerase I, thermostable (polA) from Thermus thermophilus (strain ATCC 27634 / DSM 579 / HB8).